The chain runs to 593 residues: Aspartate--tRNA(Asp/Asn) ligase (593 aa).

Glu175 provides a ligand contact to L-aspartate. The segment at Gln199 to Lys202 is aspartate. Residues Arg221 and His452 each coordinate L-aspartate. Arg221–Glu223 is a binding site for ATP. ATP is bound at residue Glu486. Arg493 lines the L-aspartate pocket. Gly538 to Arg541 contributes to the ATP binding site.

The protein belongs to the class-II aminoacyl-tRNA synthetase family. Type 1 subfamily. In terms of assembly, homodimer.

It localises to the cytoplasm. It catalyses the reaction tRNA(Asx) + L-aspartate + ATP = L-aspartyl-tRNA(Asx) + AMP + diphosphate. In terms of biological role, aspartyl-tRNA synthetase with relaxed tRNA specificity since it is able to aspartylate not only its cognate tRNA(Asp) but also tRNA(Asn). Reaction proceeds in two steps: L-aspartate is first activated by ATP to form Asp-AMP and then transferred to the acceptor end of tRNA(Asp/Asn). This is Aspartate--tRNA(Asp/Asn) ligase from Novosphingobium aromaticivorans (strain ATCC 700278 / DSM 12444 / CCUG 56034 / CIP 105152 / NBRC 16084 / F199).